Reading from the N-terminus, the 116-residue chain is Iron-sulfur cluster insertion protein ErpA (116 aa).

Cysteine 44, cysteine 108, and cysteine 110 together coordinate iron-sulfur cluster.

The protein belongs to the HesB/IscA family. Homodimer. It depends on iron-sulfur cluster as a cofactor.

Its function is as follows. Required for insertion of 4Fe-4S clusters for at least IspG. This Shewanella baltica (strain OS223) protein is Iron-sulfur cluster insertion protein ErpA.